We begin with the raw amino-acid sequence, 201 residues long: Recombination protein RecR (201 aa).

The C4-type zinc finger occupies 58–73 (CPECGLLTEEERCGLC). A Toprim domain is found at 81–176 (TLLCVVESSA…RTTRIAHGVP (96 aa)).

This sequence belongs to the RecR family.

Functionally, may play a role in DNA repair. It seems to be involved in an RecBC-independent recombinational process of DNA repair. It may act with RecF and RecO. In Halorhodospira halophila (strain DSM 244 / SL1) (Ectothiorhodospira halophila (strain DSM 244 / SL1)), this protein is Recombination protein RecR.